The following is a 242-amino-acid chain: Phosphoribosylaminoimidazole-succinocarboxamide synthase (242 aa).

This sequence belongs to the SAICAR synthetase family.

It catalyses the reaction 5-amino-1-(5-phospho-D-ribosyl)imidazole-4-carboxylate + L-aspartate + ATP = (2S)-2-[5-amino-1-(5-phospho-beta-D-ribosyl)imidazole-4-carboxamido]succinate + ADP + phosphate + 2 H(+). The protein operates within purine metabolism; IMP biosynthesis via de novo pathway; 5-amino-1-(5-phospho-D-ribosyl)imidazole-4-carboxamide from 5-amino-1-(5-phospho-D-ribosyl)imidazole-4-carboxylate: step 1/2. This chain is Phosphoribosylaminoimidazole-succinocarboxamide synthase (purC), found in Methanocaldococcus jannaschii (strain ATCC 43067 / DSM 2661 / JAL-1 / JCM 10045 / NBRC 100440) (Methanococcus jannaschii).